Consider the following 116-residue polypeptide: Translation initiation factor 1A (116 aa).

The tract at residues 1-25 (MRCLSKKHQKQGDEHGGEIPLPNPD) is disordered. The S1-like domain occupies 17-91 (GEIPLPNPDE…EKGEVVYKYG (75 aa)).

It belongs to the eIF-1A family.

Functionally, seems to be required for maximal rate of protein biosynthesis. Enhances ribosome dissociation into subunits and stabilizes the binding of the initiator Met-tRNA(I) to 40 S ribosomal subunits. The sequence is that of Translation initiation factor 1A (eIF1A) from Desulfurococcus amylolyticus (strain DSM 18924 / JCM 16383 / VKM B-2413 / 1221n) (Desulfurococcus kamchatkensis).